The following is a 1047-amino-acid chain: Error-prone DNA polymerase (1047 aa).

It belongs to the DNA polymerase type-C family. DnaE2 subfamily.

The protein resides in the cytoplasm. It catalyses the reaction DNA(n) + a 2'-deoxyribonucleoside 5'-triphosphate = DNA(n+1) + diphosphate. DNA polymerase involved in damage-induced mutagenesis and translesion synthesis (TLS). It is not the major replicative DNA polymerase. The sequence is that of Error-prone DNA polymerase from Methylococcus capsulatus (strain ATCC 33009 / NCIMB 11132 / Bath).